The chain runs to 327 residues: Eukaryotic translation initiation factor 3 subunit I (327 aa).

WD repeat units follow at residues 8 to 47 (GHQR…RLGT), 50 to 89 (GHIG…ALGK), 147 to 186 (EQQS…ELNS), 189 to 228 (DHTA…CLKT), and 286 to 327 (GHFG…HTFE).

It belongs to the eIF-3 subunit I family. As to quaternary structure, component of the eukaryotic translation initiation factor 3 (eIF-3) complex.

Its subcellular location is the cytoplasm. In terms of biological role, component of the eukaryotic translation initiation factor 3 (eIF-3) complex, which is involved in protein synthesis of a specialized repertoire of mRNAs and, together with other initiation factors, stimulates binding of mRNA and methionyl-tRNAi to the 40S ribosome. The eIF-3 complex specifically targets and initiates translation of a subset of mRNAs involved in cell proliferation. This is Eukaryotic translation initiation factor 3 subunit I from Anopheles gambiae (African malaria mosquito).